Reading from the N-terminus, the 216-residue chain is Fucoxanthin-chlorophyll a-c binding protein C, chloroplastic (216 aa).

Residues 1-38 (MKSAIMAVASAAPGLRGPSAFNGAALTTSAKSSSAMKM) constitute a chloroplast transit peptide. A run of 3 helical transmembrane segments spans residues 80-100 (IAML…PGML), 121-141 (IPPG…LAVM), and 182-202 (GRAA…NNKP).

This sequence belongs to the fucoxanthin chlorophyll protein family. In terms of assembly, the LHC complex of chromophytic algae is composed of fucoxanthin, chlorophyll A and C bound non-covalently by fucoxanthin chlorophyll proteins (FCPs). The ratio of pigments in this LHC is; fucoxanthin: chlorophyll C: chlorophyll A; (0.6-1): (0.1-0.3): (1).

It localises to the plastid. It is found in the chloroplast thylakoid membrane. In terms of biological role, the light-harvesting complex (LHC) functions as a light receptor, it captures and delivers excitation energy to photosystems with which it is closely associated. Energy is transferred from the carotenoid and chlorophyll C (or B) to chlorophyll A and the photosynthetic reaction centers where it is used to synthesize ATP and reducing power. The polypeptide is Fucoxanthin-chlorophyll a-c binding protein C, chloroplastic (FCPC) (Macrocystis pyrifera (Giant kelp)).